The sequence spans 372 residues: Chaperone protein DnaJ (372 aa).

A J domain is found at 5 to 70 (DYYDLLEVSR…EKRAGYDRYG (66 aa)). The CR-type zinc-finger motif lies at 134–212 (GIQAPIHYVT…CGGSGRKRDE (79 aa)). Zn(2+) contacts are provided by cysteine 147, cysteine 150, cysteine 164, cysteine 167, cysteine 186, cysteine 189, cysteine 200, and cysteine 203. 4 CXXCXGXG motif repeats span residues 147–154 (CNTCQGTG), 164–171 (CNTCQGSG), 186–193 (CTTCYGEG), and 200–207 (CKKCGGSG).

Belongs to the DnaJ family. Homodimer. Requires Zn(2+) as cofactor.

It is found in the cytoplasm. Participates actively in the response to hyperosmotic and heat shock by preventing the aggregation of stress-denatured proteins and by disaggregating proteins, also in an autonomous, DnaK-independent fashion. Unfolded proteins bind initially to DnaJ; upon interaction with the DnaJ-bound protein, DnaK hydrolyzes its bound ATP, resulting in the formation of a stable complex. GrpE releases ADP from DnaK; ATP binding to DnaK triggers the release of the substrate protein, thus completing the reaction cycle. Several rounds of ATP-dependent interactions between DnaJ, DnaK and GrpE are required for fully efficient folding. Also involved, together with DnaK and GrpE, in the DNA replication of plasmids through activation of initiation proteins. The protein is Chaperone protein DnaJ of Wolbachia pipientis subsp. Culex pipiens (strain wPip).